A 538-amino-acid polypeptide reads, in one-letter code: Putative outer membrane porin BglH (538 aa).

The first 25 residues, 1–25 (MFRRNLITSAILLMAPLAFSAQSLA), serve as a signal peptide directing secretion. The tract at residues 52–82 (KDEEKKKYTPATVNRSVSTNDQGYAANPFPT) is disordered. Over residues 62–73 (ATVNRSVSTNDQ) the composition is skewed to polar residues.

This sequence belongs to the porin LamB (TC 1.B.3) family.

The protein localises to the cell outer membrane. Functionally, may be a sugar porin with a broad carbohydrate specificity. The sequence is that of Putative outer membrane porin BglH (bglH) from Shigella sonnei (strain Ss046).